Consider the following 432-residue polypeptide: UDP-N-acetylglucosamine 1-carboxyvinyltransferase (432 aa).

Residue 22–23 (KN) participates in phosphoenolpyruvate binding. R92 lines the UDP-N-acetyl-alpha-D-glucosamine pocket. The Proton donor role is filled by C116. Position 116 is a 2-(S-cysteinyl)pyruvic acid O-phosphothioketal (C116). Residues 121-125 (RPVDQ), D307, and I329 contribute to the UDP-N-acetyl-alpha-D-glucosamine site.

This sequence belongs to the EPSP synthase family. MurA subfamily.

The protein resides in the cytoplasm. The enzyme catalyses phosphoenolpyruvate + UDP-N-acetyl-alpha-D-glucosamine = UDP-N-acetyl-3-O-(1-carboxyvinyl)-alpha-D-glucosamine + phosphate. It participates in cell wall biogenesis; peptidoglycan biosynthesis. Its function is as follows. Cell wall formation. Adds enolpyruvyl to UDP-N-acetylglucosamine. The protein is UDP-N-acetylglucosamine 1-carboxyvinyltransferase of Psychrobacter sp. (strain PRwf-1).